A 513-amino-acid polypeptide reads, in one-letter code: ATP synthase subunit alpha (513 aa).

169 to 176 (GDRQTGKT) lines the ATP pocket.

It belongs to the ATPase alpha/beta chains family. F-type ATPases have 2 components, CF(1) - the catalytic core - and CF(0) - the membrane proton channel. CF(1) has five subunits: alpha(3), beta(3), gamma(1), delta(1), epsilon(1). CF(0) has three main subunits: a(1), b(2) and c(9-12). The alpha and beta chains form an alternating ring which encloses part of the gamma chain. CF(1) is attached to CF(0) by a central stalk formed by the gamma and epsilon chains, while a peripheral stalk is formed by the delta and b chains.

Its subcellular location is the cell inner membrane. The enzyme catalyses ATP + H2O + 4 H(+)(in) = ADP + phosphate + 5 H(+)(out). Produces ATP from ADP in the presence of a proton gradient across the membrane. The alpha chain is a regulatory subunit. In Ralstonia pickettii (strain 12J), this protein is ATP synthase subunit alpha.